The sequence spans 404 residues: Probable thioredoxin reductase ARB_06224 (404 aa).

The N-terminal stretch at 1-22 (MGVQRLALALIAFTSALTSVIA) is a signal peptide. 67–75 (DEGIYRNGA) is a binding site for FAD. Cysteines 172 and 175 form a disulfide. N-linked (GlcNAc...) asparagine glycosylation occurs at Asn213. 334-343 (DANNDGSTNG) provides a ligand contact to FAD.

Belongs to the class-II pyridine nucleotide-disulfide oxidoreductase family. Homodimer. FAD is required as a cofactor.

The protein localises to the secreted. The catalysed reaction is [thioredoxin]-dithiol + NADP(+) = [thioredoxin]-disulfide + NADPH + H(+). The chain is Probable thioredoxin reductase ARB_06224 from Arthroderma benhamiae (strain ATCC MYA-4681 / CBS 112371) (Trichophyton mentagrophytes).